The chain runs to 537 residues: CTP synthase (537 aa).

The amidoligase domain stretch occupies residues 1–265; sequence MVHFIFVTGG…DNKVLKFFNI (265 aa). Ser-13 contributes to the CTP binding site. Ser-13 contacts UTP. Residues 14-19 and Asp-71 each bind ATP; that span reads SLGKGL. Residues Asp-71 and Glu-139 each coordinate Mg(2+). CTP-binding positions include 146–148 and Lys-222; that span reads DIE. Lys-222 lines the UTP pocket. Residues 290 to 536 enclose the Glutamine amidotransferase type-1 domain; sequence RIAIIAKYHK…IKAAIEYNKC (247 aa). Gly-352 contributes to the L-glutamine binding site. The active-site Nucleophile; for glutamine hydrolysis is Cys-379. Residues 380–383, Glu-403, and Arg-464 each bind L-glutamine; that span reads FGMQ. Catalysis depends on residues His-509 and Glu-511.

This sequence belongs to the CTP synthase family. As to quaternary structure, homotetramer.

The enzyme catalyses UTP + L-glutamine + ATP + H2O = CTP + L-glutamate + ADP + phosphate + 2 H(+). It catalyses the reaction L-glutamine + H2O = L-glutamate + NH4(+). The catalysed reaction is UTP + NH4(+) + ATP = CTP + ADP + phosphate + 2 H(+). It participates in pyrimidine metabolism; CTP biosynthesis via de novo pathway; CTP from UDP: step 2/2. With respect to regulation, allosterically activated by GTP, when glutamine is the substrate; GTP has no effect on the reaction when ammonia is the substrate. The allosteric effector GTP functions by stabilizing the protein conformation that binds the tetrahedral intermediate(s) formed during glutamine hydrolysis. Inhibited by the product CTP, via allosteric rather than competitive inhibition. In terms of biological role, catalyzes the ATP-dependent amination of UTP to CTP with either L-glutamine or ammonia as the source of nitrogen. Regulates intracellular CTP levels through interactions with the four ribonucleotide triphosphates. The protein is CTP synthase of Rickettsia peacockii (strain Rustic).